A 431-amino-acid chain; its full sequence is Lipid storage droplets surface-binding protein 1 (431 aa).

The tract at residues Lys-397–Tyr-431 is disordered. The span at Asn-418–Tyr-431 shows a compositional bias: polar residues.

This sequence belongs to the perilipin family.

The protein localises to the cytoplasm. It localises to the lipid droplet. Required for normal deposition of neutral lipids in the oocyte. The protein is Lipid storage droplets surface-binding protein 1 of Drosophila melanogaster (Fruit fly).